A 205-amino-acid chain; its full sequence is COP9 signalosome complex subunit 7 (205 aa).

Positions 1–135 constitute a PCI domain; that stretch reads MEEKISQAID…QTLHVSWALE (135 aa). A Phosphoserine modification is found at S183.

It belongs to the CSN7/EIF3M family. CSN7 subfamily. Component of the COP9 signalosome (CSN) complex.

Component of the COP9 signalosome (CSN) complex that acts as an regulator of the ubiquitin (Ubl) conjugation pathway by mediating the deneddylation of the cullin subunit of SCF-type E3 ubiquitin-protein ligase complexes. This Schizosaccharomyces pombe (strain 972 / ATCC 24843) (Fission yeast) protein is COP9 signalosome complex subunit 7 (csn71).